Consider the following 213-residue polypeptide: Putative manganese efflux pump MntP (213 aa).

6 helical membrane passes run 3–23 (ILSI…VSVA), 36–56 (ALKV…IGWG), 67–87 (AFDH…MIFE), 130–150 (LAIA…FLGI), 152–172 (IVQT…LGVI), and 187–207 (IVGG…HTGI).

It belongs to the MntP (TC 9.B.29) family.

The protein localises to the cell membrane. In terms of biological role, probably functions as a manganese efflux pump. The sequence is that of Putative manganese efflux pump MntP from Clostridium perfringens (strain 13 / Type A).